A 443-amino-acid polypeptide reads, in one-letter code: Adenylate cyclase (443 aa).

Transmembrane regions (helical) follow at residues 47 to 69 (VLTITAWLAVVVTGSFALMQLAT), 74 to 93 (WYIALINVFTAVTFAIVPLL), 98 to 120 (GLVAPLTFIGTAYVAIFAIGWDV), 124 to 143 (AGAQFFFLVAAALVVLLVGI), 148 to 167 (LAVGLAAVAAGLVIALEFLV), and 180 to 202 (SVSFVLTTVSACGVAVATVWFAL). At 203–443 (RDTARAEAVM…RGAEPRTAGV (241 aa)) the chain is on the cytoplasmic side. The 128-residue stretch at 251–378 (SVLFADIVGF…DAVNVASRME (128 aa)) folds into the Guanylate cyclase domain. Residues aspartate 256 and aspartate 300 each coordinate Mg(2+).

It belongs to the adenylyl cyclase class-4/guanylyl cyclase family. As to quaternary structure, homodimer. Can also exist as monomer. Requires Mg(2+) as cofactor. The cofactor is Mn(2+).

The protein resides in the cell membrane. The catalysed reaction is ATP = 3',5'-cyclic AMP + diphosphate. This is Adenylate cyclase (cya) from Mycobacterium bovis (strain ATCC BAA-935 / AF2122/97).